Consider the following 339-residue polypeptide: 1-aminocyclopropane-1-carboxylate deaminase (339 aa).

N6-(pyridoxal phosphate)lysine is present on K52. The Nucleophile role is filled by S79.

It belongs to the ACC deaminase/D-cysteine desulfhydrase family. In terms of assembly, homotrimer. The cofactor is pyridoxal 5'-phosphate.

The enzyme catalyses 1-aminocyclopropane-1-carboxylate + H2O = 2-oxobutanoate + NH4(+). Functionally, catalyzes a cyclopropane ring-opening reaction, the irreversible conversion of 1-aminocyclopropane-1-carboxylate (ACC) to ammonia and alpha-ketobutyrate. Allows growth on ACC as a nitrogen source. This chain is 1-aminocyclopropane-1-carboxylate deaminase, found in Bradyrhizobium sp. (strain ORS 278).